We begin with the raw amino-acid sequence, 428 residues long: Ribulose bisphosphate carboxylase (428 aa).

K151 functions as the Proton acceptor in the catalytic mechanism. Position 153 (K153) interacts with substrate. The Mg(2+) site is built by K177, D179, and E180. K177 bears the N6-carboxylysine mark. H270 functions as the Proton acceptor in the catalytic mechanism. Residues R271, H303, 354–356 (SGG), and 376–379 (QFGG) contribute to the substrate site.

Belongs to the RuBisCO large chain family. Type III subfamily. In terms of assembly, homodimer or homodecamer. In contrast to form I RuBisCO, the form III RuBisCO is composed solely of large subunits. Mg(2+) serves as cofactor.

The catalysed reaction is 2 (2R)-3-phosphoglycerate + 2 H(+) = D-ribulose 1,5-bisphosphate + CO2 + H2O. It carries out the reaction D-ribulose 1,5-bisphosphate + O2 = 2-phosphoglycolate + (2R)-3-phosphoglycerate + 2 H(+). In terms of biological role, catalyzes the addition of molecular CO(2) and H(2)O to ribulose 1,5-bisphosphate (RuBP), generating two molecules of 3-phosphoglycerate (3-PGA). Functions in an archaeal AMP degradation pathway, together with AMP phosphorylase and R15P isomerase. The chain is Ribulose bisphosphate carboxylase from Methanosarcina barkeri (strain Fusaro / DSM 804).